The following is a 313-amino-acid chain: Olfactory receptor 6E1 (313 aa).

Asparagine 3 is a glycosylation site (N-linked (GlcNAc...) asparagine). 7 helical membrane-spanning segments follow: residues 25–45 (IFLGFLLTYFLILLGNFLIIF), 64–84 (FAMLEIWFTSVIFPKMLTNII), 96–116 (FLQAFLYFFLGTTEFFLLAVM), 142–162 (LVFCSWMSGLLLIIVPSSIVF), 192–212 (LVEFLGFVIANFSLLGTLAVT), 238–258 (TCSSHIIVVSLFYGSCIFMYV), and 271–291 (KVVALLNTVVTPTLNPFIYTL). A disulfide bridge links cysteine 95 with cysteine 177.

It belongs to the G-protein coupled receptor 1 family.

The protein localises to the cell membrane. Odorant receptor. Activated by (-)-citronellal and to a lesser extent by (+)-citronellal. Not activated by carvone or limonene. In Mus musculus (Mouse), this protein is Olfactory receptor 6E1.